The chain runs to 111 residues: Repressed By RIM101 protein 1 (111 aa).

The signal sequence occupies residues 1–19; sequence MKFSTTLLALTASIAAVMS. Residues 71–90 form a disordered region; the sequence is SGASSATGGSSAAKSGSSSG. Serine 81 carries GPI-anchor amidated serine lipidation. Residues 82–111 constitute a propeptide, removed in mature form; it reads AAKSGSSSGAGFAPVAGAGSLAAIAGLLLL.

Post-translationally, the GPI-anchor is attached to the protein in the endoplasmic reticulum and serves to target the protein to the cell surface. There, the glucosamine-inositol phospholipid moiety is cleaved off and the GPI-modified mannoprotein is covalently attached via its lipidless GPI glycan remnant to the 1,6-beta-glucan of the outer cell wall layer.

Its subcellular location is the secreted. It is found in the cell wall. The protein resides in the membrane. In terms of biological role, probable cell wall protein required for filamentation at low pH. This is Repressed By RIM101 protein 1 (RBR1) from Candida albicans (strain SC5314 / ATCC MYA-2876) (Yeast).